The chain runs to 764 residues: 5-methyltetrahydropteroyltriglutamate--homocysteine methyltransferase (764 aa).

Residues 16–19 (RELK) and K112 contribute to the 5-methyltetrahydropteroyltri-L-glutamate site. L-homocysteine-binding positions include 431–433 (IGS) and E484. L-methionine-binding positions include 431–433 (IGS) and E484. 5-methyltetrahydropteroyltri-L-glutamate contacts are provided by residues 515–516 (RC) and W561. D599 contacts L-homocysteine. D599 provides a ligand contact to L-methionine. Residue E605 participates in 5-methyltetrahydropteroyltri-L-glutamate binding. Positions 641, 643, and 665 each coordinate Zn(2+). The active-site Proton donor is H694. Residue C726 participates in Zn(2+) binding.

The protein belongs to the vitamin-B12 independent methionine synthase family. The cofactor is Zn(2+).

The catalysed reaction is 5-methyltetrahydropteroyltri-L-glutamate + L-homocysteine = tetrahydropteroyltri-L-glutamate + L-methionine. It functions in the pathway amino-acid biosynthesis; L-methionine biosynthesis via de novo pathway; L-methionine from L-homocysteine (MetE route): step 1/1. Its function is as follows. Catalyzes the transfer of a methyl group from 5-methyltetrahydrofolate to homocysteine resulting in methionine formation. The chain is 5-methyltetrahydropteroyltriglutamate--homocysteine methyltransferase from Paraburkholderia phytofirmans (strain DSM 17436 / LMG 22146 / PsJN) (Burkholderia phytofirmans).